The sequence spans 445 residues: Putative ubiquitin carboxyl-terminal hydrolase L293 (445 aa).

Residues 133-441 (KALANFGNSC…SAYIILYGDI (309 aa)) form the USP domain. Cysteine 142 acts as the Nucleophile in catalysis. Histidine 384 (proton acceptor) is an active-site residue.

Belongs to the peptidase C19 family.

It is found in the virion. The catalysed reaction is Thiol-dependent hydrolysis of ester, thioester, amide, peptide and isopeptide bonds formed by the C-terminal Gly of ubiquitin (a 76-residue protein attached to proteins as an intracellular targeting signal).. This Acanthamoeba polyphaga mimivirus (APMV) protein is Putative ubiquitin carboxyl-terminal hydrolase L293.